We begin with the raw amino-acid sequence, 831 residues long: Intraflagellar transport protein 88 (831 aa).

11 TPR repeats span residues 68–101 (IFKLLRDGMSAASCKDYVTALGRIREAIKLEQKV), 120–153 (TCIWMHWAQIQALGGQPEMALSTYEKIVKTAEGA), 156–189 (AQIRFNMGNINHNLGKYNEALKNFRMAIDQASPS), 248–281 (FDPLYTVLIGYYALGVPEKMIDAYSRLIDSSILI), 492–525 (RGVHTNIAFIYYLKGDYEASARHAQIALEIDPYD), 526–559 (SFAHINLGCTYSKTNQWELSLREFLKAQEINMES), 560–593 (VQATYNAGLVYFKQQEYKTAYSCFQKVASKLPSY), 595–627 (DAIYMSADCLARMSQIDEAIQMLSNLVTMFSAV), 632–665 (PSIYIRLGELYSIAGDEGQAAHYFKEAHRLVPFS), 666–699 (LAVINWLGSHYIKNELYEQARVCFEKASRVDTTT), and 700–733 (PKWSLAVAACLRKSKQYRDAIYEYKHILKRFPTN). The tract at residues 785-816 (RRNSVAAVGPGSRAGQDRFEASNNRVSSNTGD) is disordered. Residues 805–815 (ASNNRVSSNTG) show a composition bias toward polar residues.

Its subcellular location is the cell projection. It localises to the cilium. It is found in the flagellum. The protein resides in the cytoplasm. The protein localises to the cytoskeleton. Its subcellular location is the flagellum axoneme. It localises to the flagellum basal body. In terms of biological role, component of the intraflagellar transport complex B (IFT-B) involved in flagellar assembly. This chain is Intraflagellar transport protein 88, found in Giardia intestinalis (strain ATCC 50803 / WB clone C6) (Giardia lamblia).